The following is a 154-amino-acid chain: MAEENHDEAVRVAELRKKRTFRTFAYRGVELEQLLDLSAEQLVDLFHARARRRMLRGLGPNASRFIRKLRKAKSEAPLNEKPATVKTHLRNMIILPEMVGSVVGIYNGKLFNQVEIRPEMIGHYLGEFSITYKPTKHGRPGIGATHSSRFIPLK.

Phosphoserine is present on Ser-63.

The protein belongs to the universal ribosomal protein uS19 family. Component of the small ribosomal subunit (SSU). Mature yeast ribosomes consist of a small (40S) and a large (60S) subunit. The 40S small subunit contains 1 molecule of ribosomal RNA (18S rRNA) and at least 33 different proteins. The large 60S subunit contains 3 rRNA molecules (25S, 5.8S and 5S rRNA) and at least 46 different proteins.

Its subcellular location is the cytoplasm. It is found in the nucleus. It localises to the nucleolus. Functionally, component of the ribosome, a large ribonucleoprotein complex responsible for the synthesis of proteins in the cell. The small ribosomal subunit (SSU) binds messenger RNAs (mRNAs) and translates the encoded message by selecting cognate aminoacyl-transfer RNA (tRNA) molecules. The large subunit (LSU) contains the ribosomal catalytic site termed the peptidyl transferase center (PTC), which catalyzes the formation of peptide bonds, thereby polymerizing the amino acids delivered by tRNAs into a polypeptide chain. The nascent polypeptides leave the ribosome through a tunnel in the LSU and interact with protein factors that function in enzymatic processing, targeting, and the membrane insertion of nascent chains at the exit of the ribosomal tunnel. uS19 is involved in the nuclear export of the small ribosomal subunit precursor. Has a role in the late stage of the assembly of pre-40S particles within the nucleus and controls their export to the cytoplasm. In Schizosaccharomyces pombe (strain 972 / ATCC 24843) (Fission yeast), this protein is Small ribosomal subunit protein uS19B (rps1502).